The sequence spans 500 residues: Protein gar2 (500 aa).

2 stretches are compositionally biased toward basic and acidic residues: residues 1 to 41 (MAKK…KEIA) and 59 to 68 (KRASSPEPSK). Residues 1–262 (MAKKDKTSVK…TKPSQDSNET (262 aa)) form a disordered region. Positions 69 to 78 (KSVKKQKKSK) are enriched in basic residues. A compositionally biased stretch (low complexity) spans 90–120 (ESSSSESESSSSESESSSSESESSSSESSSS). Basic and acidic residues predominate over residues 126-137 (VIVKTEEKKESS). Residues S143, S144, and S146 each carry the phosphoserine modification. Residues 152 to 163 (AVVKIEEKKESS) are compositionally biased toward basic and acidic residues. Over residues 164–182 (SDSSSESSSSESESESSSS) the composition is skewed to low complexity. Residues 191–201 (VEKTEEKKEGS) show a composition bias toward basic and acidic residues. Positions 202-218 (SESSSDSESSSDSSSES) are enriched in low complexity. A compositionally biased stretch (acidic residues) spans 219-233 (GDSDSSSDSESESSS). Residues 234–250 (EDEKKRKAEPASEERPA) show a composition bias toward basic and acidic residues. RRM domains follow at residues 263 to 341 (CTVF…LSNP) and 366 to 443 (DTVF…FSTP). Residues 441 to 500 (STPRTGGGSRGGRGGFGGRGGFGGRGGFGGGRGRGRGGARSGNPNRGSVAPFSGNKVTFD) form a disordered region. A compositionally biased stretch (gly residues) spans 445-480 (TGGGSRGGRGGFGGRGGFGGRGGFGGGRGRGRGGAR).

It belongs to the RRM GAR family.

It is found in the nucleus. The protein resides in the nucleolus. Functionally, helps the assembly of pre-ribosomal particles containing 18S rRNA. The chain is Protein gar2 (gar2) from Schizosaccharomyces pombe (strain 972 / ATCC 24843) (Fission yeast).